A 364-amino-acid chain; its full sequence is D-alanine--D-alanine ligase (364 aa).

Positions 146–352 (KLCAMNAGIA…FAELVEKLLL (207 aa)) constitute an ATP-grasp domain. An ATP-binding site is contributed by 179–234 (TKRFDWPLFVKPASLGSSVGISKVRNAEELAAALENACGLDSKALVEAAISGREIE). Residues aspartate 305, glutamate 319, and asparagine 321 each contribute to the Mg(2+) site.

The protein belongs to the D-alanine--D-alanine ligase family. The cofactor is Mg(2+). Mn(2+) serves as cofactor.

Its subcellular location is the cytoplasm. It carries out the reaction 2 D-alanine + ATP = D-alanyl-D-alanine + ADP + phosphate + H(+). It participates in cell wall biogenesis; peptidoglycan biosynthesis. Cell wall formation. The sequence is that of D-alanine--D-alanine ligase from Chlorobaculum tepidum (strain ATCC 49652 / DSM 12025 / NBRC 103806 / TLS) (Chlorobium tepidum).